Here is a 336-residue protein sequence, read N- to C-terminus: Ribose-phosphate pyrophosphokinase 1 (336 aa).

Residues D150, H152, D161, and D165 each contribute to the Mg(2+) site. The binding of phosphoribosylpyrophosphate stretch occupies residues 236–251 (GKVAVMVDDMIDTAGT).

The protein belongs to the ribose-phosphate pyrophosphokinase family.

The catalysed reaction is D-ribose 5-phosphate + ATP = 5-phospho-alpha-D-ribose 1-diphosphate + AMP + H(+). This Spinacia oleracea (Spinach) protein is Ribose-phosphate pyrophosphokinase 1 (PRS1).